Here is a 556-residue protein sequence, read N- to C-terminus: Secreted RxLR effector protein 114 (556 aa).

The first 19 residues, 1–19 (MCGAHFVAIALLVAAGCQT), serve as a signal peptide directing secretion. Disordered stretches follow at residues 43 to 76 (LQSR…GVLK), 108 to 138 (NQLK…DSDK), and 389 to 408 (NDKS…EDWN). The RxLR-dEER signature appears at 46-66 (RNLRESRDSKDDLLSAGDEER). A compositionally biased stretch (basic and acidic residues) spans 47–67 (NLRESRDSKDDLLSAGDEERT).

This sequence belongs to the RxLR effector family.

The protein localises to the secreted. Its subcellular location is the host cell. In terms of biological role, secreted effector that partially suppresses the host cell death induced by cell death-inducing proteins. The protein is Secreted RxLR effector protein 114 of Plasmopara viticola (Downy mildew of grapevine).